The following is a 256-amino-acid chain: Flap endonuclease Xni (256 aa).

Aspartate 105 contacts Mg(2+). A 5'-3' exonuclease domain is found at arginine 163 to glutamate 256. The K(+) site is built by leucine 172, alanine 173, proline 181, valine 183, and isoleucine 186. The interval glycine 185–serine 190 is interaction with DNA.

It belongs to the Xni family. It depends on Mg(2+) as a cofactor. Requires K(+) as cofactor.

Has flap endonuclease activity. During DNA replication, flap endonucleases cleave the 5'-overhanging flap structure that is generated by displacement synthesis when DNA polymerase encounters the 5'-end of a downstream Okazaki fragment. The polypeptide is Flap endonuclease Xni (Shewanella pealeana (strain ATCC 700345 / ANG-SQ1)).